A 725-amino-acid polypeptide reads, in one-letter code: Eukaryotic elongation factor 2 kinase (725 aa).

A compositionally biased stretch (basic and acidic residues) spans 1-12 (MADEDLIFRLEG). The interval 1-38 (MADEDLIFRLEGVDGGQSPRAGHDGDSDGDSDDEEGYF) is disordered. Ala2 carries the post-translational modification N-acetylalanine. Phosphoserine occurs at positions 18 and 27. Acidic residues predominate over residues 27–36 (SDGDSDDEEG). Residues Ser61 and Ser66 each carry the phosphoserine; by autocatalysis modification. Phosphoserine is present on residues Ser70, Ser71, Ser72, and Ser74. Position 78 is a phosphoserine; by autocatalysis and TRPM7 (Ser78). The interval 81 to 94 (FKEAWKHAIQKAKH) is calmodulin-binding. Residues 116 to 326 (RYNAVTGEWL…ICESMGLAPF (211 aa)) enclose the Alpha-type protein kinase domain. The residue at position 243 (Ser243) is a Phosphoserine. 296 to 302 (GDGNLGV) serves as a coordination point for ATP. Phosphothreonine; by autocatalysis is present on residues Thr348 and Thr353. Disordered stretches follow at residues 352–405 (GTEE…PHSQ) and 423–477 (SRDH…SLGS). Ser359 carries the phosphoserine; by MAPK13 and CDK1 modification. The span at 363-377 (RTLSGSRPPLLRPLS) shows a compositional bias: low complexity. Ser366 carries the post-translational modification Phosphoserine; by autocatalysis, RPS6KA1 and RPS6KB1. The span at 386–404 (SDVTFDSLPSSPSSATPHS) shows a compositional bias: polar residues. Ser392 bears the Phosphoserine mark. Ser398 is subject to Phosphoserine; by AMPK. Composition is skewed to basic and acidic residues over residues 423 to 436 (SRDH…RESE) and 445 to 469 (SEKR…RKYE). Ser435 bears the Phosphoserine mark. Ser445 bears the Phosphoserine; by autocatalysis mark. Residue Ser470 is modified to Phosphoserine. Ser474 carries the post-translational modification Phosphoserine; by autocatalysis. Phosphoserine is present on Ser477. Ser491 is modified (phosphoserine; by autocatalysis). At Ser500 the chain carries Phosphoserine; by PKA.

The protein belongs to the protein kinase superfamily. Alpha-type protein kinase family. Monomer or homodimer. Interacts with Calmodulin/CALM1; this interaction is strictly required for phosphorylation activity. In terms of processing, autophosphorylated at multiple residues, Thr-348 being the major site. Phosphorylated by AMP-activated protein kinase AMPK at Ser-398 leading to EEF2K activation and protein synthesis inhibition. Phosphorylated by TRPM7 at Ser-78 resulting in improved protein stability, higher EE2F phosphorylated and subsequently reduced rate of protein synthesis. Phosphorylation by other kinases such as CDK1 and MAPK13 at Ser-359 or RPS6KA1 and RPS6KB1 at Ser-366 instead decrease EEF2K activity and promote protein synthesis.

It catalyses the reaction [translation elongation factor 2] + ATP = [translation elongation factor 2]-phosphate + ADP + H(+). With respect to regulation, undergoes calcium/calmodulin-dependent intramolecular autophosphorylation, and this results in it becoming partially calcium/calmodulin-independent. Threonine kinase that regulates protein synthesis by controlling the rate of peptide chain elongation. Upon activation by a variety of upstream kinases including AMPK or TRPM7, phosphorylates the elongation factor EEF2 at a single site, renders it unable to bind ribosomes and thus inactive. In turn, the rate of protein synthesis is reduced. The polypeptide is Eukaryotic elongation factor 2 kinase (EEF2K) (Homo sapiens (Human)).